The sequence spans 683 residues: Leucine zipper putative tumor suppressor 2 homolog (683 aa).

Disordered regions lie at residues 1–37, 82–107, and 262–320; these read MAAL…TMGS, YSSQ…NNGN, and MGHI…CDRS. 2 stretches are compositionally biased toward polar residues: residues 11 to 37 and 96 to 107; these read IDQN…TMGS and KPSTTTSGNNGN. Residues 290 to 308 are compositionally biased toward low complexity; sequence SDSGRSSSSKSTGSLSGRG. The stretch at 324–665 forms a coiled coil; the sequence is SDEILIRELE…LELEARELDE (342 aa).

It belongs to the LZTS2 family.

Its subcellular location is the cytoplasm. The protein resides in the cytoskeleton. It localises to the microtubule organizing center. The protein localises to the centrosome. Functionally, negative regulator of katanin-mediated microtubule severing and release from the centrosome. Required for central spindle formation and the completion of cytokinesis. Negative regulator of the Wnt signaling pathway. Represses beta-catenin-mediated transcriptional activation by promoting the nuclear exclusion of beta-catenin. The chain is Leucine zipper putative tumor suppressor 2 homolog (lzts2) from Xenopus tropicalis (Western clawed frog).